Reading from the N-terminus, the 717-residue chain is Probable cyclic nucleotide-gated ion channel 5 (717 aa).

Residues 1-102 (MAGKRENFVR…DKFLLYCNKL (102 aa)) lie on the Cytoplasmic side of the membrane. Residues 103-123 (FVASCILSVFVDPFFFYLPVI) traverse the membrane as a helical segment. Residues 124–136 (NAESKCLGIDRKL) are Extracellular-facing. A helical transmembrane segment spans residues 137–157 (AITASTLRTFIDVFYLAHMAL). Over 158–190 (QLRTAYIAPSSRVFGRGELVIDPAQIAKRYLQR) the chain is Cytoplasmic. Residues 191–211 (WFIIDFLSVLPLPQIVVWRFL) traverse the membrane as a helical segment. Topologically, residues 212–224 (QSSNGSDVLATKQ) are extracellular. The helical transmembrane segment at 225-245 (ALLFIVLVQYIPRFLRVLPLT) threads the bilayer. Over 246–265 (SELKRTAGVFAETAWAGAAY) the chain is Cytoplasmic. A helical membrane pass occupies residues 266–286 (YLLLYMLASHIVGAFWYLLAL). Residues 287 to 391 (ERNDACWQEA…GQGLETSTYP (105 aa)) lie on the Extracellular side of the membrane. The chain crosses the membrane as a helical span at residues 392–412 (MEIIFSISLAISGLILFALLI). Over 413–717 (GNMQTYLQSL…KPPEPDFTAD (305 aa)) the chain is Cytoplasmic. A nucleoside 3',5'-cyclic phosphate contacts are provided by residues 498–628 (LFKS…TFRF) and Glu-569. The calmodulin-binding stretch occupies residues 614-629 (FRRLHSRQVQHTFRFY). The region spanning 634–663 (RTWAACFIQAAWRRYCKRKKMEEAEAEAAA) is the IQ domain.

The protein belongs to the cyclic nucleotide-gated cation channel (TC 1.A.1.5) family. As to quaternary structure, homotetramer or heterotetramer.

Its subcellular location is the cell membrane. Its function is as follows. Probable cyclic nucleotide-gated ion channel. This is Probable cyclic nucleotide-gated ion channel 5 (CNGC5) from Arabidopsis thaliana (Mouse-ear cress).